The sequence spans 2920 residues: Cadherin-related hmr-1 (2920 aa).

A signal peptide spans 1–19; sequence MSWNILLILLISNLDEVLA. Residues 20–2779 lie on the Extracellular side of the membrane; that stretch reads KTLLKLPSNA…AVSKLGISSP (2760 aa). N72, N243, N253, N339, and N508 each carry an N-linked (GlcNAc...) asparagine glycan. 14 Cadherin domains span residues 322-422, 425-530, 531-642, 643-747, 749-865, 871-979, 980-1093, 1097-1211, 1212-1335, 1336-1436, 1438-1546, 1548-1661, 1662-1772, and 1772-1874; these read SSRS…PPSF, SPLP…PPQF, AKQE…VPTF, TRPL…SAVF, PTSQ…KPEF, YSDI…SPQF, ERPS…APKW, PDCK…VPQF, TVDL…APSF, EEQK…APQF, QQKY…SPIF, ERLF…APFF, EKTR…APHI, and IHGA…EPYT. Residues N658, N685, N715, and N826 are each glycosylated (N-linked (GlcNAc...) asparagine). N1177 is a glycosylation site (N-linked (GlcNAc...) asparagine). N1417 carries N-linked (GlcNAc...) asparagine glycosylation. An N-linked (GlcNAc...) asparagine glycan is attached at N1646. N1935, N2224, and N2232 each carry an N-linked (GlcNAc...) asparagine glycan. The EGF-like 1 domain maps to 2246–2283; the sequence is APPACQHSLCHNDGVCHNTNPGFFCECRNDGLKGARCQ. 3 cysteine pairs are disulfide-bonded: C2250-C2261, C2255-C2270, and C2272-C2282. A Laminin G-like domain is found at 2284-2478; it reads GTTRSFGGNG…AFEQNSEKGC (195 aa). N2307 and N2332 each carry an N-linked (GlcNAc...) asparagine glycan. 3 cysteine pairs are disulfide-bonded: C2452-C2478, C2501-C2515, and C2517-C2526. The 36-residue stretch at 2492–2527 folds into the EGF-like 2 domain; that stretch reads SLNHCIHGDCFADVQGSGAMVAKCVCDPGWGGARCE. A glycan (N-linked (GlcNAc...) asparagine) is linked at N2623. Residues 2780-2800 traverse the membrane as a helical segment; it reads AIILILVSLALLILLVMMMVV. The Cytoplasmic segment spans residues 2801–2920; the sequence is YTRRSPGAFE…VTLESIESAQ (120 aa). S2839 bears the Phosphoserine mark. Positions 2858 to 2891 are disordered; sequence IGGHPPHYPPRGMAPPKDDHELNSKIKDLETDQN. Residues 2873 to 2887 are compositionally biased toward basic and acidic residues; the sequence is PKDDHELNSKIKDLE. The residue at position 2909 (S2909) is a Phosphoserine. Phosphothreonine is present on T2912. 2 positions are modified to phosphoserine: S2915 and S2918.

Monomer in solution. Isoform a is a component of a core catenin-cadherin complex consisting of hmr-1, hmp-1 and hmp-2; the complex localizes to adherens junctions. Isoform a interacts with hmp-2; the interaction is direct. Isoform a interacts (via intracellular domain) with jac-1. Phosphorylation at T-2912 increases the binding affinity for hmp-2. Post-translationally, sumoylated. Sumoylation prevents accumulation at adherens junctions and decreases the binding affinity for hmp-2. Expressed in epidermal cells (at protein level). As to expression, neuron-specific.

It is found in the cell membrane. The protein resides in the cell junction. It localises to the adherens junction. Its subcellular location is the cell projection. The protein localises to the dendrite. Functionally, cadherins are calcium-dependent cell adhesion proteins. They preferentially interact with themselves in a homophilic manner in connecting cells; cadherins may thus contribute to the sorting of heterogeneous cell types. Required for adherens junction assembly and connecting adherens junctions to the cytoskeleton. Isoform a is required for cell migration during body enclosure and cell shape changes during body elongation. Required for proper localization of other junctional components, such as hmp-1, hmp-2, jac-1 and pac-1. Recruitment of pac-1 is required to establish cell polarity, independent of its role in cell adhesion. Required for primodial germ cell ingression and adherence to endodermal cells during gastrulation. In terms of biological role, isoform b is involved in axonal guidance in a subset of motor neurons. In Caenorhabditis elegans, this protein is Cadherin-related hmr-1.